Consider the following 398-residue polypeptide: Serine/threonine-protein kinase UL13 (398 aa).

Residues 1–10 show a composition bias toward gly residues; it reads MAAGGGGGGV. The interval 1–44 is disordered; it reads MAAGGGGGGVSRAALARPPIHRGTSAPGGAIAAAGGDGDGDEAS. Positions 80 to 398 constitute a Protein kinase domain; sequence TGDPVAVGAG…GGARFAELAA (319 aa). ATP-binding positions include 86–94 and Lys103; that span reads VGAGSYGSV. Asp194 functions as the Proton acceptor in the catalytic mechanism.

It belongs to the protein kinase superfamily. Ser/Thr protein kinase family. In terms of processing, autophosphorylated.

It is found in the virion tegument. Its subcellular location is the host nucleus. It localises to the host cytoplasm. The protein resides in the host endoplasmic reticulum. The catalysed reaction is L-seryl-[protein] + ATP = O-phospho-L-seryl-[protein] + ADP + H(+). It carries out the reaction L-threonyl-[protein] + ATP = O-phospho-L-threonyl-[protein] + ADP + H(+). Functionally, multifunctional serine/threonine kinase that plays a role in several processes including egress of virus particles from the nucleus, modulation of the actin cytoskeleton and regulation of viral and cellular gene expression. Regulates the nuclear localization of viral envelopment factors UL34 and UL31, by phosphorylating the US3 kinase, indicating a role in nuclear egress. Disrupts host nuclear lamins, including LMNA and LMNB1. Phosphorylates the viral Fc receptor composed of glycoproteins E (gE) and I (gI). Phosphorylation of glycoprotein E (gE) by UL13 alters its subcellular localization, from the host early endosome to the plasma membrane. Participates in the transcriptional regulation of cellular and viral mRNAs mainly by phosphorylating the viral transcriptional regulator ICP22. Functions as an antagonist of the host RLR-mediated antiviral responses via suppression of the transcription of cytosolic receptors RIGI and IFIH1. Facilitates immune evasion also by recruiting host RNF5 to initiate the 'Lys-27'-/'Lys-29'-linked polyubiquitination of STING1; leading to its degradation. Blocks host IFN-beta transactivation mediated by the cGAS-STING pathway by phosphorylating host IRF3. In turn, IRF3 binding to the IRF3-responsive promoters and downstream interferon stimulated genes/ISG expression are greatly impaired. Induces the activation of the host DNA damage response via H2AX phosphorylation to improve efficient viral replication and progeny production. The chain is Serine/threonine-protein kinase UL13 (UL13) from Suid herpesvirus 1 (strain NIA-3) (SuHV-1).